A 385-amino-acid chain; its full sequence is Ribosomal RNA large subunit methyltransferase G (385 aa).

The protein belongs to the methyltransferase superfamily. RlmG family.

The protein resides in the cytoplasm. It carries out the reaction guanosine(1835) in 23S rRNA + S-adenosyl-L-methionine = N(2)-methylguanosine(1835) in 23S rRNA + S-adenosyl-L-homocysteine + H(+). In terms of biological role, specifically methylates the guanine in position 1835 (m2G1835) of 23S rRNA. In Vibrio parahaemolyticus serotype O3:K6 (strain RIMD 2210633), this protein is Ribosomal RNA large subunit methyltransferase G.